Consider the following 395-residue polypeptide: S-adenosylmethionine synthase (395 aa).

Histidine 16 is an ATP binding site. Residue aspartate 18 coordinates Mg(2+). Residue glutamate 44 coordinates K(+). L-methionine is bound by residues glutamate 57 and glutamine 100. Positions 100–110 (QSPDIAQGVDR) are flexible loop. ATP is bound by residues 167–169 (DAK), 233–234 (RF), aspartate 242, 248–249 (RK), alanine 265, and lysine 269. Aspartate 242 provides a ligand contact to L-methionine. Residue lysine 273 coordinates L-methionine.

It belongs to the AdoMet synthase family. As to quaternary structure, homotetramer; dimer of dimers. Mg(2+) serves as cofactor. Requires K(+) as cofactor.

It is found in the cytoplasm. The enzyme catalyses L-methionine + ATP + H2O = S-adenosyl-L-methionine + phosphate + diphosphate. The protein operates within amino-acid biosynthesis; S-adenosyl-L-methionine biosynthesis; S-adenosyl-L-methionine from L-methionine: step 1/1. Catalyzes the formation of S-adenosylmethionine (AdoMet) from methionine and ATP. The overall synthetic reaction is composed of two sequential steps, AdoMet formation and the subsequent tripolyphosphate hydrolysis which occurs prior to release of AdoMet from the enzyme. The chain is S-adenosylmethionine synthase from Burkholderia vietnamiensis (strain G4 / LMG 22486) (Burkholderia cepacia (strain R1808)).